A 308-amino-acid chain; its full sequence is Serine/threonine-protein phosphatase 4 catalytic subunit (308 aa).

Residues Asp-51, His-53, Asp-79, and Asn-111 each coordinate Mn(2+). Residue His-112 is the Proton donor of the active site. His-161 and His-235 together coordinate Mn(2+).

It belongs to the PPP phosphatase family. PP-4 (PP-X) subfamily. In terms of assembly, catalytic subunit of the histone H2A phosphatase complex (HTP-C) containing PPH3, PSY2 and PSY4. Inactivated in a complex with phosphatase methylesterase PPE1 (PP2Ai). Interacts with phosphatase 2A activator RRD1, which can reactivate PP2Ai by dissociating the catalytic subunit from the complex. Interacts with SPT5 and TAP42. Requires Mn(2+) as cofactor. Post-translationally, reversibly methyl esterified on Leu-308 by leucine carboxyl methyltransferase 1 (PPM1) and protein phosphatase methylesterase 1 (PPE1). Carboxyl methylation influences the affinity of the catalytic subunit for the different regulatory subunits, thereby modulating the PP2A holoenzyme's substrate specificity, enzyme activity and cellular localization.

The protein localises to the cytoplasm. The protein resides in the nucleus. It catalyses the reaction O-phospho-L-seryl-[protein] + H2O = L-seryl-[protein] + phosphate. It carries out the reaction O-phospho-L-threonyl-[protein] + H2O = L-threonyl-[protein] + phosphate. Its function is as follows. Forms the histone H2A phosphatase complex in association with the regulatory subunits PSY2 and PSY4, which dephosphorylates H2AS128ph (gamma-H2A) that has been displaced from sites of DNA lesions in the double-stranded DNA break repair process. Dephosphorylation is necessary for efficient recovery from the DNA damage checkpoint. PPH3 is directly involved in the dephosphorylation and activation of the transcription factor GLN3 in response to nutrient availability. This is Serine/threonine-protein phosphatase 4 catalytic subunit (PPH3) from Saccharomyces cerevisiae (strain ATCC 204508 / S288c) (Baker's yeast).